The sequence spans 145 residues: Basic phospholipase A2 textilotoxin A chain (145 aa).

The N-terminal stretch at 1-19 is a signal peptide; the sequence is MHPAHLLVLLGVCVSLLGA. A propeptide spanning residues 20–27 is cleaved from the precursor; the sequence is SDIPPLPL. Cystine bridges form between cysteine 38–cysteine 98, cysteine 54–cysteine 144, cysteine 56–cysteine 72, cysteine 71–cysteine 125, cysteine 78–cysteine 118, cysteine 87–cysteine 111, and cysteine 105–cysteine 116. 3 residues coordinate Ca(2+): tyrosine 55, glycine 57, and glycine 59. The active site involves histidine 75. A Ca(2+)-binding site is contributed by aspartate 76. Residue aspartate 119 is part of the active site.

This sequence belongs to the phospholipase A2 family. Group I subfamily. D49 sub-subfamily. In terms of assembly, heterohexamer. 2 forms exist: 2 A or 2 B chains, 2 C chains and 2 covalently-linked D chains, and 1 A or 1 B, 1 C, 2 covalently-linked D chains and 2 differentially glycosylated covalently-linked D chains. Textilotoxin was originally described as pentameric. Ca(2+) serves as cofactor. As to expression, expressed by the venom gland.

The protein resides in the secreted. It carries out the reaction a 1,2-diacyl-sn-glycero-3-phosphocholine + H2O = a 1-acyl-sn-glycero-3-phosphocholine + a fatty acid + H(+). In terms of biological role, snake venom oligomeric phospholipase A2 that has potent presynaptic neurotoxicity. Chain A possesses a very low toxicity, but is essential for neurotoxicity. Possesses a low enzymatic activity. PLA2 catalyzes the calcium-dependent hydrolysis of the 2-acyl groups in 3-sn-phosphoglycerides. The polypeptide is Basic phospholipase A2 textilotoxin A chain (Pseudonaja textilis (Eastern brown snake)).